Reading from the N-terminus, the 581-residue chain is Myoneurin (581 aa).

The region spanning Cys24–Ser89 is the BTB domain. The tract at residues Pro167 to Gln193 is disordered. Short sequence motifs (nuclear localization signal) lie at residues Lys174–Lys190 and Lys256–Lys261. The residue at position 288 (Ser288) is a Phosphoserine. C2H2-type zinc fingers lie at residues Pro301–His323, Tyr329–His351, Tyr357–His380, Tyr386–His408, Tyr414–His436, Tyr442–His464, and Phe470–His493.

It belongs to the krueppel C2H2-type zinc-finger protein family.

It is found in the nucleus. The chain is Myoneurin (MYNN) from Bos taurus (Bovine).